A 456-amino-acid polypeptide reads, in one-letter code: Bifunctional protein GlmU (456 aa).

The tract at residues 1–228 (MPQNTLNTVI…SHLAAGVNNK (228 aa)) is pyrophosphorylase. Residues 11 to 14 (LAAG), lysine 25, glutamine 75, 80 to 81 (GT), 102 to 104 (YGD), glycine 138, glutamate 153, asparagine 168, and asparagine 226 contribute to the UDP-N-acetyl-alpha-D-glucosamine site. Residue aspartate 104 participates in Mg(2+) binding. Asparagine 226 is a Mg(2+) binding site. The segment at 229–249 (RQLAELERIFQTEQAQELLKA) is linker. The segment at 250–456 (GVTLRDPARF…GWVRPEKNKQ (207 aa)) is N-acetyltransferase. UDP-N-acetyl-alpha-D-glucosamine-binding residues include arginine 332 and lysine 350. Histidine 362 serves as the catalytic Proton acceptor. Residues tyrosine 365 and asparagine 376 each contribute to the UDP-N-acetyl-alpha-D-glucosamine site. Residues alanine 379, 385 to 386 (NY), serine 404, alanine 422, and arginine 439 contribute to the acetyl-CoA site.

In the N-terminal section; belongs to the N-acetylglucosamine-1-phosphate uridyltransferase family. This sequence in the C-terminal section; belongs to the transferase hexapeptide repeat family. In terms of assembly, homotrimer. Mg(2+) is required as a cofactor.

Its subcellular location is the cytoplasm. It catalyses the reaction alpha-D-glucosamine 1-phosphate + acetyl-CoA = N-acetyl-alpha-D-glucosamine 1-phosphate + CoA + H(+). The enzyme catalyses N-acetyl-alpha-D-glucosamine 1-phosphate + UTP + H(+) = UDP-N-acetyl-alpha-D-glucosamine + diphosphate. The protein operates within nucleotide-sugar biosynthesis; UDP-N-acetyl-alpha-D-glucosamine biosynthesis; N-acetyl-alpha-D-glucosamine 1-phosphate from alpha-D-glucosamine 6-phosphate (route II): step 2/2. Its pathway is nucleotide-sugar biosynthesis; UDP-N-acetyl-alpha-D-glucosamine biosynthesis; UDP-N-acetyl-alpha-D-glucosamine from N-acetyl-alpha-D-glucosamine 1-phosphate: step 1/1. It participates in bacterial outer membrane biogenesis; LPS lipid A biosynthesis. Catalyzes the last two sequential reactions in the de novo biosynthetic pathway for UDP-N-acetylglucosamine (UDP-GlcNAc). The C-terminal domain catalyzes the transfer of acetyl group from acetyl coenzyme A to glucosamine-1-phosphate (GlcN-1-P) to produce N-acetylglucosamine-1-phosphate (GlcNAc-1-P), which is converted into UDP-GlcNAc by the transfer of uridine 5-monophosphate (from uridine 5-triphosphate), a reaction catalyzed by the N-terminal domain. This is Bifunctional protein GlmU from Neisseria gonorrhoeae.